The sequence spans 258 residues: MDGIVEQKSVLVHSKIGDAGKRNGLINTRNFMAESRDGLVSVYPAPQYQSHRLVASAAPGSLEGGRSDPVQQLLDPNTLQQSVDSHYRPNIILYSDGVLRSWGDGVATDCCETTFIEDRSPTKDSLEYPDGKFIDLSGDDIKIHTLSYDVEEEEELQELESDYSSDTESEDNFLMMPPRDHLGLSVFSMLCCFWPLGIAAFYLSHETNKAVAKGDFHQASTSSRRALFLAVLSITIGTGIYVGVAVALIAYLSKNNHL.

The Cytoplasmic segment spans residues 1–181; that stretch reads MDGIVEQKSV…NFLMMPPRDH (181 aa). Phosphoserine is present on Ser137. Residues 182–202 form a helical membrane-spanning segment; the sequence is LGLSVFSMLCCFWPLGIAAFY. Residues 203–228 are Extracellular-facing; that stretch reads LSHETNKAVAKGDFHQASTSSRRALF. Residues 229–249 constitute an intramembrane region (helical); it reads LAVLSITIGTGIYVGVAVALI. Topologically, residues 250-258 are extracellular; it reads AYLSKNNHL.

The protein belongs to the CD225/Dispanin family. As to quaternary structure, homodimer. Interacts with GRIA1 and GRIA2. As to expression, enriched in the cerebellum and also expressed in the neocortex and modestly in the hippocampus (at protein level). Expressed in hippocampal neurons, both in cell body and neurites, however its presence is enriched at excitatory synapses and also found in postsynaptic cells.

The protein resides in the cell membrane. It localises to the early endosome membrane. It is found in the postsynaptic density membrane. Its subcellular location is the synapse. The protein localises to the cell projection. The protein resides in the dendrite. It localises to the dendritic spine. Its function is as follows. May regulate AMPA receptor content at nascent synapses, and have a role in postsynaptic development and maturation. The polypeptide is Synapse differentiation-inducing gene protein 1 (Syndig1) (Rattus norvegicus (Rat)).